We begin with the raw amino-acid sequence, 357 residues long: Phosphoribosylformylglycinamidine cyclo-ligase (357 aa).

It belongs to the AIR synthase family.

The protein localises to the cytoplasm. It carries out the reaction 2-formamido-N(1)-(5-O-phospho-beta-D-ribosyl)acetamidine + ATP = 5-amino-1-(5-phospho-beta-D-ribosyl)imidazole + ADP + phosphate + H(+). It participates in purine metabolism; IMP biosynthesis via de novo pathway; 5-amino-1-(5-phospho-D-ribosyl)imidazole from N(2)-formyl-N(1)-(5-phospho-D-ribosyl)glycinamide: step 2/2. This Rhizobium leguminosarum bv. trifolii (strain WSM2304) protein is Phosphoribosylformylglycinamidine cyclo-ligase.